The primary structure comprises 348 residues: GTP 3',8-cyclase (348 aa).

The Radical SAM core domain maps to 24 to 242 (PFGRAVTYLR…EKQFTLTDID (219 aa)). Arginine 33 lines the GTP pocket. [4Fe-4S] cluster-binding residues include cysteine 40 and cysteine 44. Tyrosine 46 is a binding site for S-adenosyl-L-methionine. Position 47 (cysteine 47) interacts with [4Fe-4S] cluster. Arginine 82 is a GTP binding site. Position 86 (glycine 86) interacts with S-adenosyl-L-methionine. Residue threonine 115 coordinates GTP. Serine 139 provides a ligand contact to S-adenosyl-L-methionine. Position 175 (lysine 175) interacts with GTP. Residue methionine 209 coordinates S-adenosyl-L-methionine. Residues cysteine 272 and cysteine 275 each coordinate [4Fe-4S] cluster. 277–279 (RVR) is a binding site for GTP. Residue cysteine 289 participates in [4Fe-4S] cluster binding.

The protein belongs to the radical SAM superfamily. MoaA family. Monomer and homodimer. [4Fe-4S] cluster is required as a cofactor.

It carries out the reaction GTP + AH2 + S-adenosyl-L-methionine = (8S)-3',8-cyclo-7,8-dihydroguanosine 5'-triphosphate + 5'-deoxyadenosine + L-methionine + A + H(+). It participates in cofactor biosynthesis; molybdopterin biosynthesis. Catalyzes the cyclization of GTP to (8S)-3',8-cyclo-7,8-dihydroguanosine 5'-triphosphate. The chain is GTP 3',8-cyclase from Rhizobium etli (strain CIAT 652).